Reading from the N-terminus, the 316-residue chain is Calumenin-B (316 aa).

A signal peptide spans 1 to 19 (MELRPLVMCFALCVVYASS). EF-hand domains follow at residues 69 to 104 (ESKE…SQKR), 105 to 140 (WIYD…YILD), 152 to 187 (QMIS…EEYD), 189 to 224 (MKDI…QEGD), 230 to 265 (WVRT…SDYD), and 266 to 301 (HAEA…FVGS). Ca(2+) contacts are provided by aspartate 82, aspartate 84, aspartate 86, tyrosine 88, glutamate 93, aspartate 118, asparagine 120, aspartate 122, and glutamate 129. An N-linked (GlcNAc...) asparagine glycan is attached at asparagine 132. Ca(2+) is bound by residues aspartate 165, aspartate 167, aspartate 169, lysine 171, glutamate 176, aspartate 202, asparagine 204, aspartate 206, glutamate 213, aspartate 243, asparagine 245, aspartate 247, arginine 249, glutamate 254, aspartate 279, aspartate 281, aspartate 283, lysine 285, and glutamate 290. The Prevents secretion from ER motif lies at 313 to 316 (HDEF).

Belongs to the CREC family. As to quaternary structure, interacts with ggcx.

The protein resides in the endoplasmic reticulum membrane. The protein localises to the golgi apparatus. Its subcellular location is the secreted. It is found in the melanosome. It localises to the sarcoplasmic reticulum lumen. In terms of biological role, involved in regulation of vitamin K-dependent carboxylation of multiple N-terminal glutamate residues. Seems to inhibit gamma-carboxylase ggcx. Binds 7 calcium ions with a low affinity. This chain is Calumenin-B (calub), found in Salmo salar (Atlantic salmon).